We begin with the raw amino-acid sequence, 140 residues long: ATP synthase epsilon chain (140 aa).

The protein belongs to the ATPase epsilon chain family. F-type ATPases have 2 components, CF(1) - the catalytic core - and CF(0) - the membrane proton channel. CF(1) has five subunits: alpha(3), beta(3), gamma(1), delta(1), epsilon(1). CF(0) has three main subunits: a, b and c.

The protein localises to the cell inner membrane. In terms of biological role, produces ATP from ADP in the presence of a proton gradient across the membrane. In Thermodesulfovibrio yellowstonii (strain ATCC 51303 / DSM 11347 / YP87), this protein is ATP synthase epsilon chain.